Reading from the N-terminus, the 423-residue chain is Serine--tRNA ligase (423 aa).

An L-serine-binding site is contributed by 229 to 231 (TAE). 258 to 260 (RRE) lines the ATP pocket. Glu281 contributes to the L-serine binding site. 345–348 (EISS) lines the ATP pocket. Residue Ser379 coordinates L-serine.

It belongs to the class-II aminoacyl-tRNA synthetase family. Type-1 seryl-tRNA synthetase subfamily. Homodimer. The tRNA molecule binds across the dimer.

The protein resides in the cytoplasm. It catalyses the reaction tRNA(Ser) + L-serine + ATP = L-seryl-tRNA(Ser) + AMP + diphosphate + H(+). The catalysed reaction is tRNA(Sec) + L-serine + ATP = L-seryl-tRNA(Sec) + AMP + diphosphate + H(+). The protein operates within aminoacyl-tRNA biosynthesis; selenocysteinyl-tRNA(Sec) biosynthesis; L-seryl-tRNA(Sec) from L-serine and tRNA(Sec): step 1/1. Catalyzes the attachment of serine to tRNA(Ser). Is also able to aminoacylate tRNA(Sec) with serine, to form the misacylated tRNA L-seryl-tRNA(Sec), which will be further converted into selenocysteinyl-tRNA(Sec). The protein is Serine--tRNA ligase (serS1) of Methanosarcina barkeri (strain Fusaro / DSM 804).